The following is a 375-amino-acid chain: Growth/differentiation factor 8 (375 aa).

Residues 1–23 (MQKLQLCVYIYLFMLIVAGPVDL) form the signal peptide. Residues 24-266 (NENSEQKENV…VTDTPKRSRR (243 aa)) constitute a propeptide that is removed on maturation. Asn71 carries N-linked (GlcNAc...) asparagine glycosylation. Intrachain disulfides connect Cys272-Cys282, Cys281-Cys340, Cys309-Cys372, and Cys313-Cys374.

This sequence belongs to the TGF-beta family. Homodimer; disulfide-linked. Interacts with WFIKKN2, leading to inhibit its activity. Interacts with FSTL3. In terms of processing, synthesized as large precursor molecule that undergoes proteolytic cleavage to generate an N-terminal propeptide and a disulfide linked C-terminal dimer, which is the biologically active molecule. The circulating form consists of a latent complex of the C-terminal dimer and other proteins, including its propeptide, which maintain the C-terminal dimer in a latent, inactive state. Ligand activation requires additional cleavage of the prodomain by a tolloid-like metalloproteinase.

It is found in the secreted. In terms of biological role, acts specifically as a negative regulator of skeletal muscle growth. This is Growth/differentiation factor 8 (MSTN) from Pan paniscus (Pygmy chimpanzee).